Reading from the N-terminus, the 454-residue chain is Glutamyl-tRNA reductase (454 aa).

Residues threonine 49–arginine 52, serine 109, glutamate 114–glutamine 116, and glutamine 120 contribute to the substrate site. The active-site Nucleophile is the cysteine 50. Glycine 189–glycine 194 contributes to the NADP(+) binding site.

This sequence belongs to the glutamyl-tRNA reductase family. As to quaternary structure, homodimer.

It carries out the reaction (S)-4-amino-5-oxopentanoate + tRNA(Glu) + NADP(+) = L-glutamyl-tRNA(Glu) + NADPH + H(+). Its pathway is porphyrin-containing compound metabolism; protoporphyrin-IX biosynthesis; 5-aminolevulinate from L-glutamyl-tRNA(Glu): step 1/2. Catalyzes the NADPH-dependent reduction of glutamyl-tRNA(Glu) to glutamate 1-semialdehyde (GSA). The polypeptide is Glutamyl-tRNA reductase (Geobacillus kaustophilus (strain HTA426)).